We begin with the raw amino-acid sequence, 221 residues long: Small ribosomal subunit protein uS3 (221 aa).

The KH type-2 domain occupies 39–107 (IREYIKRKLY…QVHVNIVEVK (69 aa)).

This sequence belongs to the universal ribosomal protein uS3 family. In terms of assembly, part of the 30S ribosomal subunit. Forms a tight complex with proteins S10 and S14.

Binds the lower part of the 30S subunit head. Binds mRNA in the 70S ribosome, positioning it for translation. This Desulforamulus reducens (strain ATCC BAA-1160 / DSM 100696 / MI-1) (Desulfotomaculum reducens) protein is Small ribosomal subunit protein uS3.